The sequence spans 615 residues: Leucine aminopeptidase 2 (615 aa).

Residues 139–141 and 271–276 contribute to the a peptide site; these read QCQ and PYGGME. Residue histidine 300 participates in Zn(2+) binding. The active-site Proton acceptor is glutamate 301. Residues histidine 304 and glutamate 323 each contribute to the Zn(2+) site. The Proton donor role is filled by tyrosine 386.

This sequence belongs to the peptidase M1 family. Requires Zn(2+) as cofactor.

Its subcellular location is the cytoplasm. The protein resides in the nucleus. It catalyses the reaction an epoxide + H2O = an ethanediol. In terms of biological role, aminopeptidase that preferentially cleaves di- and tripeptides. Also has low epoxide hydrolase activity (in vitro). Can hydrolyze the epoxide leukotriene LTA(4) but it forms preferentially 5,6-dihydroxy-7,9,11,14-eicosatetraenoic acid rather than the cytokine leukotriene B(4) as the product compared to the homologous mammalian enzyme (in vitro). In Aspergillus oryzae (strain ATCC 42149 / RIB 40) (Yellow koji mold), this protein is Leucine aminopeptidase 2.